The following is a 164-amino-acid chain: Protein-export protein SecB (164 aa).

Belongs to the SecB family. As to quaternary structure, homotetramer, a dimer of dimers. One homotetramer interacts with 1 SecA dimer.

It is found in the cytoplasm. One of the proteins required for the normal export of preproteins out of the cell cytoplasm. It is a molecular chaperone that binds to a subset of precursor proteins, maintaining them in a translocation-competent state. It also specifically binds to its receptor SecA. In Janthinobacterium sp. (strain Marseille) (Minibacterium massiliensis), this protein is Protein-export protein SecB.